The following is a 166-amino-acid chain: Cyclin-dependent kinase 4 inhibitor D (166 aa).

M1 bears the N-acetylmethionine mark. ANK repeat units lie at residues F41 to V69, S73 to A102, T106 to R135, and T138 to L166.

It belongs to the CDKN2 cyclin-dependent kinase inhibitor family. As to quaternary structure, interacts with CDK6.

It localises to the nucleus. Its subcellular location is the cytoplasm. In terms of biological role, interacts strongly with CDK4 and CDK6 and inhibits them. In Bos taurus (Bovine), this protein is Cyclin-dependent kinase 4 inhibitor D (CDKN2D).